Consider the following 567-residue polypeptide: Probable transport protein (567 aa).

The segment covering 1–30 (MSDRVEVNERRSDSVSEKEPARDDARKDVT) has biased composition (basic and acidic residues). A disordered region spans residues 1–38 (MSDRVEVNERRSDSVSEKEPARDDARKDVTDDQEDAPP). Residues 1–46 (MSDRVEVNERRSDSVSEKEPARDDARKDVTDDQEDAPPFMTANNAR) are Cytoplasmic-facing. Residues 47-67 (VMLVQAIGGSLNGYSIGFVGV) traverse the membrane as a helical segment. At 68–160 (YSTLFGYSTN…PSGYSSSESG (93 aa)) the chain is on the extracellular side. A helical transmembrane segment spans residues 161–181 (IFAGSMIAGCLIGSVFAGPLA). The Cytoplasmic segment spans residues 182 to 189 (SKIGARLS). Residues 190–210 (FLLVGLVGVVASVMYHASCAA) form a helical membrane-spanning segment. Over 211–212 (DE) the chain is Extracellular. The helical transmembrane segment at 213–233 (FWVLIVGRFVIGLFLGVICVA) threads the bilayer. Topologically, residues 234–249 (CPVYTDQNAHPKWKRT) are cytoplasmic. The chain crosses the membrane as a helical span at residues 250-270 (IGVMFQVFTTLGIFVAALMGL). Residues 271–289 (ALGQSIRFDHDGDQKVMAR) are Extracellular-facing. The chain crosses the membrane as a helical span at residues 290–310 (MQGLCVFSTLFSLLTVVLGIV). At 311 to 341 (TRESRAKFDGGEEGRAELNPSEYGYVEMIPR) the chain is on the cytoplasmic side. Residues 342–362 (LLMGCVMAGTLQLTGINAVMN) traverse the membrane as a helical segment. The Extracellular portion of the chain corresponds to 363–366 (YAPT). Residues 367–387 (IMGSLGLAPLVGNFVVMLWNF) form a helical membrane-spanning segment. Over 388-404 (VTTLASIPLSYVFTMRH) the chain is Cytoplasmic. The chain crosses the membrane as a helical span at residues 405–425 (VFLFGSIFTSCMCLFMCGIPV). The Extracellular segment spans residues 426–437 (YPGVSKKLEAKN). Residues 438-458 (GVAITGILLFILGFEVCVGPC) form a helical membrane-spanning segment. At 459-480 (YYVLTQDMFPPSFRPRGASFTQ) the chain is on the cytoplasmic side. Residues 481 to 501 (VAQFIFNLIINVCYPIATESI) form a helical membrane-spanning segment. The Extracellular segment spans residues 502 to 514 (SGGPSGNQDKGQA). A helical membrane pass occupies residues 515–535 (VAFIFFGGLGLICFVIQVFFL). Residues 536-567 (HPWDEERDGKKVVAPAIGKKELSEESIGNRAE) lie on the Cytoplasmic side of the membrane.

The protein belongs to the major facilitator superfamily. Sugar transporter (TC 2.A.1.1) family.

The protein resides in the membrane. In terms of biological role, probable membrane transport protein. The polypeptide is Probable transport protein (PRO-1) (Leishmania enriettii).